The chain runs to 3476 residues: Abnormal spindle-like microcephaly-associated protein homolog (3476 aa).

Residues methionine 1–serine 34 are disordered. Residues serine 280, serine 283, serine 367, serine 392, serine 425, and serine 605 each carry the phosphoserine modification. One can recognise a Calponin-homology (CH) 1 domain in the interval lysine 920–glutamine 1056. Positions valine 1057–serine 1078 form a coiled coil. At serine 1103 the chain carries Phosphoserine. The region spanning serine 1110 to leucine 1261 is the Calponin-homology (CH) 2 domain. IQ domains follow at residues glutamine 1347–glutamine 1378, tyrosine 1393–serine 1422, leucine 1582–glutamine 1613, methionine 1605–serine 1634, threonine 1632–lysine 1661, isoleucine 1655–lysine 1684, methionine 1728–serine 1757, glutamine 1751–glutamine 1782, valine 1801–lysine 1830, glutamine 1824–lysine 1853, threonine 1874–lysine 1903, glutamate 1897–glutamine 1928, leucine 1947–glutamine 1978, glutamine 1970–glutamine 2001, threonine 2020–threonine 2049, cysteine 2043–glutamine 2074, leucine 2093–lysine 2124, methionine 2116–glutamine 2147, leucine 2239–glutamine 2270, methionine 2262–glutamine 2293, valine 2311–glutamine 2342, methionine 2334–glutamine 2365, glutamine 2384–glutamine 2415, methionine 2407–glutamine 2438, leucine 2457–glutamine 2488, glutamine 2530–glutamine 2561, glutamine 2624–serine 2653, arginine 2665–glutamine 2696, methionine 2688–glutamine 2719, valine 2738–alanine 2767, glutamine 2814–phenylalanine 2845, glutamine 2859–glutamine 2890, isoleucine 2909–lysine 2938, isoleucine 2932–alanine 2963, lysine 2954–glutamine 2985, arginine 3029–glutamine 3060, phenylalanine 3079–histidine 3110, and phenylalanine 3203–serine 3234.

The protein resides in the cytoplasm. The protein localises to the cytoskeleton. It localises to the spindle. It is found in the nucleus. Its function is as follows. Probable role in mitotic spindle regulation and coordination of mitotic processes. May have a preferential role in regulating neurogenesis. In Macaca fascicularis (Crab-eating macaque), this protein is Abnormal spindle-like microcephaly-associated protein homolog (ASPM).